The primary structure comprises 169 residues: Peptide methionine sulfoxide reductase MsrA (169 aa).

The active site involves Cys-10.

The protein belongs to the MsrA Met sulfoxide reductase family.

It catalyses the reaction L-methionyl-[protein] + [thioredoxin]-disulfide + H2O = L-methionyl-(S)-S-oxide-[protein] + [thioredoxin]-dithiol. It carries out the reaction [thioredoxin]-disulfide + L-methionine + H2O = L-methionine (S)-S-oxide + [thioredoxin]-dithiol. Has an important function as a repair enzyme for proteins that have been inactivated by oxidation. Catalyzes the reversible oxidation-reduction of methionine sulfoxide in proteins to methionine. In Streptococcus equi subsp. zooepidemicus (strain MGCS10565), this protein is Peptide methionine sulfoxide reductase MsrA.